The following is a 356-amino-acid chain: uncharacterized protein (356 aa).

6 helical membrane passes run 7–29 (LLSR…VSLY), 49–71 (YFLN…ISLI), 91–113 (ISPL…TFLL), 270–292 (LFYR…YLFF), 299–316 (QVIP…LVIL), and 329–348 (VLYS…KGVY).

The protein resides in the cell membrane. This is an uncharacterized protein from Aquifex aeolicus (strain VF5).